The chain runs to 156 residues: MRIKLIAVGGKMPGWVEQGYNEYVKRMPRDMPLQLIEIPMPRRQKNADPHKLKIQEGESILQSLGSGDHVVALEVEGKSWSTPQLSQQMERWRMSGQDVALLVGGPDGLSDACRARANQQWSLSPLTLPHPLVRVLLAEQLYRAWTILQGHPYHRE.

Residues Leu73, Gly104, and 123-128 (LSPLTL) each bind S-adenosyl-L-methionine.

The protein belongs to the RNA methyltransferase RlmH family. As to quaternary structure, homodimer.

The protein resides in the cytoplasm. It carries out the reaction pseudouridine(1915) in 23S rRNA + S-adenosyl-L-methionine = N(3)-methylpseudouridine(1915) in 23S rRNA + S-adenosyl-L-homocysteine + H(+). In terms of biological role, specifically methylates the pseudouridine at position 1915 (m3Psi1915) in 23S rRNA. In Hahella chejuensis (strain KCTC 2396), this protein is Ribosomal RNA large subunit methyltransferase H.